The sequence spans 434 residues: Glutamate-1-semialdehyde 2,1-aminomutase 1 (434 aa).

K270 carries the post-translational modification N6-(pyridoxal phosphate)lysine.

It belongs to the class-III pyridoxal-phosphate-dependent aminotransferase family. HemL subfamily. As to quaternary structure, homodimer. It depends on pyridoxal 5'-phosphate as a cofactor.

Its subcellular location is the cytoplasm. It carries out the reaction (S)-4-amino-5-oxopentanoate = 5-aminolevulinate. Its pathway is porphyrin-containing compound metabolism; protoporphyrin-IX biosynthesis; 5-aminolevulinate from L-glutamyl-tRNA(Glu): step 2/2. The protein is Glutamate-1-semialdehyde 2,1-aminomutase 1 of Bacillus cereus (strain AH187).